We begin with the raw amino-acid sequence, 236 residues long: Virion protein US10 homolog (236 aa).

Residues 1-32 (MDGAYGHVHNGSPMAVDGEESGAGTGTGAGAD) form a disordered region. A compositionally biased stretch (gly residues) spans 21 to 31 (SGAGTGTGAGA). The segment at 138–150 (CAYWCCLGHAFAC) is a zinc-finger region.

It belongs to the herpesviridae US10 family. Post-translationally, phosphorylated.

The protein resides in the virion tegument. The protein localises to the host nucleus matrix. In Equine herpesvirus 1 (strain Ab4p) (EHV-1), this protein is Virion protein US10 homolog.